The sequence spans 274 residues: 2,3,4,5-tetrahydropyridine-2,6-dicarboxylate N-succinyltransferase (274 aa).

Arg104 and Asp141 together coordinate substrate.

It belongs to the transferase hexapeptide repeat family. In terms of assembly, homotrimer.

Its subcellular location is the cytoplasm. The enzyme catalyses (S)-2,3,4,5-tetrahydrodipicolinate + succinyl-CoA + H2O = (S)-2-succinylamino-6-oxoheptanedioate + CoA. The protein operates within amino-acid biosynthesis; L-lysine biosynthesis via DAP pathway; LL-2,6-diaminopimelate from (S)-tetrahydrodipicolinate (succinylase route): step 1/3. This is 2,3,4,5-tetrahydropyridine-2,6-dicarboxylate N-succinyltransferase from Enterobacter sp. (strain 638).